The chain runs to 123 residues: uncharacterized protein (123 aa).

Phosphothreonine is present on Thr56. A phosphoserine mark is found at Ser73, Ser87, Ser97, Ser113, and Ser119.

As to expression, highly expressed in the kidney (at protein level).

It localises to the cytoplasm. This is an uncharacterized protein from Felis catus (Cat).